The sequence spans 275 residues: Large ribosomal subunit protein uL2 (275 aa).

A disordered region spans residues 223 to 275 (VAMNPIDHPHGGGEGRTGEAREPVSPWGTPSKGYKTRRNKRTNNMIVQRRKRK). Residues 229–244 (DHPHGGGEGRTGEARE) are compositionally biased toward basic and acidic residues.

This sequence belongs to the universal ribosomal protein uL2 family. As to quaternary structure, part of the 50S ribosomal subunit. Forms a bridge to the 30S subunit in the 70S ribosome.

One of the primary rRNA binding proteins. Required for association of the 30S and 50S subunits to form the 70S ribosome, for tRNA binding and peptide bond formation. It has been suggested to have peptidyltransferase activity; this is somewhat controversial. Makes several contacts with the 16S rRNA in the 70S ribosome. In Bordetella avium (strain 197N), this protein is Large ribosomal subunit protein uL2.